The following is a 663-amino-acid chain: Protein MICRORCHIDIA 6 (663 aa).

The tract at residues Met1–Ser77 is disordered. A compositionally biased stretch (polar residues) spans Ser49–Val62. The Nuclear localization signal signature appears at Lys552 to Ser559. Positions Asp614–Arg659 form a coiled coil.

It belongs to the MORC ATPase protein family. As to quaternary structure, homodimer and heterodimers with MORC1/CRT1 and MORC2. Interacts directly with SUVH9. Component of an RNA-directed DNA methylation (RdDM) complex that contains at least MORC6, MORC1/CRT1, MORC2, SWI3D and SUVH9. Stimulated by interaction with DMS3. Interacts with IDN2, SWI3B, SWI3C and SWI3D. Mg(2+) is required as a cofactor. The cofactor is Mn(2+).

Its subcellular location is the nucleus. Its activity is regulated as follows. Stimulated by DMS3. Involved in RNA-directed DNA methylation (RdDM) as a component of the RdDM machinery and required for gene silencing. Together with SUVH2 and SUVH9, regulates the silencing of some transposable elements (TEs). Exhibits ATPase activity. May also be involved in the regulation of chromatin architecture/condensation to maintain gene silencing. Binds DNA/RNA in a non-specific manner and exhibits endonuclease activity. Probably involved in DNA repair. Positive regulator of defense against the oomycete Hyaloperonospora arabidopsidis (Hpa). This chain is Protein MICRORCHIDIA 6, found in Arabidopsis thaliana (Mouse-ear cress).